The chain runs to 242 residues: Small ribosomal subunit protein uS3 (242 aa).

One can recognise a KH type-2 domain in the interval 39-109; that stretch reads IRQYVEKNLA…QIRINVIEVA (71 aa). Residues 220-242 are disordered; it reads VPAQAPRRQQRRRQQFEDRSSEG. Over residues 233 to 242 the composition is skewed to basic and acidic residues; sequence QQFEDRSSEG.

The protein belongs to the universal ribosomal protein uS3 family. As to quaternary structure, part of the 30S ribosomal subunit. Forms a tight complex with proteins S10 and S14.

Its function is as follows. Binds the lower part of the 30S subunit head. Binds mRNA in the 70S ribosome, positioning it for translation. The chain is Small ribosomal subunit protein uS3 from Microcystis aeruginosa (strain NIES-843 / IAM M-2473).